The primary structure comprises 193 residues: Imidazoleglycerol-phosphate dehydratase (193 aa).

The protein belongs to the imidazoleglycerol-phosphate dehydratase family.

Its subcellular location is the cytoplasm. It catalyses the reaction D-erythro-1-(imidazol-4-yl)glycerol 3-phosphate = 3-(imidazol-4-yl)-2-oxopropyl phosphate + H2O. Its pathway is amino-acid biosynthesis; L-histidine biosynthesis; L-histidine from 5-phospho-alpha-D-ribose 1-diphosphate: step 6/9. The polypeptide is Imidazoleglycerol-phosphate dehydratase (Saccharolobus islandicus (strain Y.N.15.51 / Yellowstone #2) (Sulfolobus islandicus)).